The chain runs to 562 residues: Phosphomethylpyrimidine synthase (562 aa).

Substrate-binding positions include Asn179, Met208, Tyr237, His273, 293–295, 334–337, and Glu373; these read SRG and DGLR. His377 is a binding site for Zn(2+). Tyr400 is a substrate binding site. His441 serves as a coordination point for Zn(2+). Residues Cys521, Cys524, and Cys529 each contribute to the [4Fe-4S] cluster site.

Belongs to the ThiC family. The cofactor is [4Fe-4S] cluster.

The catalysed reaction is 5-amino-1-(5-phospho-beta-D-ribosyl)imidazole + S-adenosyl-L-methionine = 4-amino-2-methyl-5-(phosphooxymethyl)pyrimidine + CO + 5'-deoxyadenosine + formate + L-methionine + 3 H(+). The protein operates within cofactor biosynthesis; thiamine diphosphate biosynthesis. In terms of biological role, catalyzes the synthesis of the hydroxymethylpyrimidine phosphate (HMP-P) moiety of thiamine from aminoimidazole ribotide (AIR) in a radical S-adenosyl-L-methionine (SAM)-dependent reaction. The chain is Phosphomethylpyrimidine synthase from Geobacillus kaustophilus (strain HTA426).